Consider the following 93-residue polypeptide: WAP four-disulfide core domain protein 13 (93 aa).

The first 22 residues, 1 to 22 (MKPVLPLQFLVVFCLALQLVPG), serve as a signal peptide directing secretion. Residues 24–73 (PKQRVLKYILEPPPCISAPENCTHLCTMQEDCEKGFQCCSSFCGIVCSSE) enclose the WAP; atypical domain. 3 cysteine pairs are disulfide-bonded: Cys45-Cys66, Cys49-Cys61, and Cys55-Cys70.

It localises to the secreted. Putative acid-stable proteinase inhibitor. This chain is WAP four-disulfide core domain protein 13 (WFDC13), found in Homo sapiens (Human).